The chain runs to 380 residues: Cytochrome b (380 aa).

4 helical membrane passes run 34-54 (FGSLLGICLLTQILTGLLLAT), 78-99 (WLIRNLHANGASFFFICIYLHI), 114-134 (WNTGIILLLTLMATAFVGYVL), and 179-199 (FFALHFLLPFMIAGLALIHLT). The heme b site is built by His84 and His98. Heme b contacts are provided by His183 and His197. His202 contacts a ubiquinone. A run of 4 helical transmembrane segments spans residues 227–247 (LKDILGFIIMFLPLTTLALFS), 289–309 (LGGVLALAASVLVLFLVPLLH), 321–341 (LSQFLFWTLVANLLILTWVGS), and 348–368 (FIIIGQLASLTYFTILLLLFP).

This sequence belongs to the cytochrome b family. As to quaternary structure, the cytochrome bc1 complex contains 11 subunits: 3 respiratory subunits (MT-CYB, CYC1 and UQCRFS1), 2 core proteins (UQCRC1 and UQCRC2) and 6 low-molecular weight proteins (UQCRH/QCR6, UQCRB/QCR7, UQCRQ/QCR8, UQCR10/QCR9, UQCR11/QCR10 and a cleavage product of UQCRFS1). This cytochrome bc1 complex then forms a dimer. It depends on heme b as a cofactor.

It is found in the mitochondrion inner membrane. Functionally, component of the ubiquinol-cytochrome c reductase complex (complex III or cytochrome b-c1 complex) that is part of the mitochondrial respiratory chain. The b-c1 complex mediates electron transfer from ubiquinol to cytochrome c. Contributes to the generation of a proton gradient across the mitochondrial membrane that is then used for ATP synthesis. The protein is Cytochrome b (MT-CYB) of Pinguinus impennis (Great auk).